A 268-amino-acid chain; its full sequence is MSGKANASKKNFEQLKRNPKRKKDNEEVVLSEKKVRNTVKRNKNHLKDLFSEGQTKHTNLKQIKIAPNKRKTWQPLSKSTRDYLQTMMESVLRTILSDRIKDKEEIQYHLNFLKNRLLQLCETLKVPPKKMEDLTNVSRLLNMERARGKANEEGLALLQEEIDKMVETTELMTGNIQSLKNKIQILASEVEEEEERVKQIHQINTSGVLSLPELSQKTLKAPTLQKEILALIPNQNALLKDLDILHNSSHMKSMSTFIEEAYKKLNAS.

The segment at 1–31 (MSGKANASKKNFEQLKRNPKRKKDNEEVVLS) is disordered. A Phosphoserine modification is found at serine 31. Residues 170 to 203 (ELMTGNIQSLKNKIQILASEVEEEEERVKQIHQI) are a coiled coil. Serine 249 carries the post-translational modification Phosphoserine.

This sequence belongs to the CENP-Q/OKP1 family. Component of the CENPA-CAD complex, composed of CENPI, CENPK, CENPL, CENPO, CENPP, CENPQ, CENPR and CENPS. The CENPA-CAD complex interacts with the CENPA-NAC complex, at least composed of CENPA, CENPC, CENPH, CENPM, CENPN, CENPT and CENPU.

Its subcellular location is the nucleus. It localises to the chromosome. The protein localises to the centromere. Component of the CENPA-CAD (nucleosome distal) complex, a complex recruited to centromeres which is involved in assembly of kinetochore proteins, mitotic progression and chromosome segregation. May be involved in incorporation of newly synthesized CENPA into centromeres via its interaction with the CENPA-NAC complex. Plays an important role in chromosome congression and in the recruitment of CENP-O complex (which comprises CENPO, CENPP, CENPQ and CENPU), CENPE and PLK1 to the kinetochores. This is Centromere protein Q (CENPQ) from Macaca fascicularis (Crab-eating macaque).